Here is a 373-residue protein sequence, read N- to C-terminus: GDP-mannose 4,6-dehydratase (373 aa).

Residues 10–15 (GITGQD), 65–66 (DL), 87–91 (LGAQS), and Y102 each bind NADP(+). T134 is an active-site residue. Catalysis depends on nucleophile residues E136 and Y158. Residues K162, H188, and R193 each contribute to the NADP(+) site.

This sequence belongs to the NAD(P)-dependent epimerase/dehydratase family. GDP-mannose 4,6-dehydratase subfamily. It depends on NADP(+) as a cofactor.

The catalysed reaction is GDP-alpha-D-mannose = GDP-4-dehydro-alpha-D-rhamnose + H2O. Functionally, catalyzes the conversion of GDP-D-mannose to GDP-4-dehydro-6-deoxy-D-mannose. This is GDP-mannose 4,6-dehydratase from Vibrio cholerae serotype O1 (strain ATCC 39315 / El Tor Inaba N16961).